The chain runs to 451 residues: MAYPSTSGMIQASSSLHGSITRRNPEGYDMPSDLDQALLLYFDGQEQDKPSTQEEPHKPLNFVKETLNIFPSQPMDGEPTPTPKASMSAPPIAGFSRRSPAPAAADGRPLTLGKTSKAAFKKEGGSGSGGAMAASASSELKGPKTPDPKTLRRLAQNREAARKSRLRKKAYIQQLETGRIRLAHLEQEIQFTRAQGAFCGAGILSPDAALFNLEYERWQEAHHQVISRLRAAVEEHRPDGELQPHVDEAMSHYGVLMAHKARLVGADPLHLLSGLWKGAVEQCFLWIGGFRPSELIKVVVRHVEPLTEQQLAAVYSAQQAARQEEDALDGGLQALLRSLSDVVSSSDAPSSSQQTPPVMYHPSAAAAMAAASFMGQYGSYSNLQLAMDKLANLAIFLRQADEERMRTLHALRRMLTVRQAARCFVAVDDYFGRLRALALFWTTTRPHPAAG.

A compositionally biased stretch (polar residues) spans methionine 1–arginine 22. 2 disordered regions span residues methionine 1–serine 32 and phenylalanine 70–leucine 151. Residues lysine 141–threonine 150 are compositionally biased toward basic and acidic residues. Residues aspartate 147–phenylalanine 191 form the bZIP domain. Residues lysine 149–lysine 169 form a basic motif region. The interval leucine 175 to isoleucine 189 is leucine-zipper. The 237-residue stretch at alanine 208 to threonine 444 folds into the DOG1 domain.

It belongs to the bZIP family. As to quaternary structure, interacts with NPR5/NH4, NH5.1 and NH5.2.

It is found in the nucleus. Transcriptional regulator involved in defense response. The protein is Transcription factor TGAL8 of Oryza sativa subsp. japonica (Rice).